Here is a 360-residue protein sequence, read N- to C-terminus: Photosystem II protein D1 3 (360 aa).

3 helical membrane-spanning segments follow: residues 29–46, 118–133, and 142–156; these read YVGWFGVLMIPTLLAATV, HFLIGCACYLGRQWEL, and WICVAYSAPLASATA. His-118 is a binding site for chlorophyll a. Tyr-126 provides a ligand contact to pheophytin a. [CaMn4O5] cluster-binding residues include Asp-170 and Glu-189. Residues 197-218 form a helical membrane-spanning segment; the sequence is FHMLGVAGVFGGSLFSAMHGSL. A chlorophyll a-binding site is contributed by His-198. Residues His-215 and 264–265 contribute to the a quinone site; that span reads SF. A Fe cation-binding site is contributed by His-215. Position 272 (His-272) interacts with Fe cation. The chain crosses the membrane as a helical span at residues 274 to 288; the sequence is FLAAWPVIGIWFTAL. His-332, Glu-333, Asp-342, and Ala-344 together coordinate [CaMn4O5] cluster. A propeptide spanning residues 345–360 is cleaved from the precursor; the sequence is AGEVAPVALTAPAING.

It belongs to the reaction center PufL/M/PsbA/D family. As to quaternary structure, PSII is composed of 1 copy each of membrane proteins PsbA, PsbB, PsbC, PsbD, PsbE, PsbF, PsbH, PsbI, PsbJ, PsbK, PsbL, PsbM, PsbT, PsbX, PsbY, PsbZ, Psb30/Ycf12, peripheral proteins PsbO, CyanoQ (PsbQ), PsbU, PsbV and a large number of cofactors. It forms dimeric complexes. Requires The D1/D2 heterodimer binds P680, chlorophylls that are the primary electron donor of PSII, and subsequent electron acceptors. It shares a non-heme iron and each subunit binds pheophytin, quinone, additional chlorophylls, carotenoids and lipids. D1 provides most of the ligands for the Mn4-Ca-O5 cluster of the oxygen-evolving complex (OEC). There is also a Cl(-1) ion associated with D1 and D2, which is required for oxygen evolution. The PSII complex binds additional chlorophylls, carotenoids and specific lipids. as cofactor. In terms of processing, tyr-161 forms a radical intermediate that is referred to as redox-active TyrZ, YZ or Y-Z. Post-translationally, C-terminally processed by CtpA; processing is essential to allow assembly of the oxygen-evolving complex and thus photosynthetic growth.

It is found in the cellular thylakoid membrane. It carries out the reaction 2 a plastoquinone + 4 hnu + 2 H2O = 2 a plastoquinol + O2. Photosystem II (PSII) is a light-driven water:plastoquinone oxidoreductase that uses light energy to abstract electrons from H(2)O, generating O(2) and a proton gradient subsequently used for ATP formation. It consists of a core antenna complex that captures photons, and an electron transfer chain that converts photonic excitation into a charge separation. The D1/D2 (PsbA/PsbD) reaction center heterodimer binds P680, the primary electron donor of PSII as well as several subsequent electron acceptors. The chain is Photosystem II protein D1 3 from Trichormus variabilis (strain ATCC 29413 / PCC 7937) (Anabaena variabilis).